The chain runs to 198 residues: Inner membrane-spanning protein YciB (198 aa).

Helical transmembrane passes span Ile36–Ile56, Leu67–Phe87, Trp90–Gly110, Leu133–Phe153, and Phe162–Leu182.

The protein belongs to the YciB family.

The protein resides in the cell inner membrane. Its function is as follows. Plays a role in cell envelope biogenesis, maintenance of cell envelope integrity and membrane homeostasis. This is Inner membrane-spanning protein YciB from Pseudomonas syringae pv. tomato (strain ATCC BAA-871 / DC3000).